The primary structure comprises 125 residues: Holo-[acyl-carrier-protein] synthase (125 aa).

Mg(2+) contacts are provided by E9 and Q58.

This sequence belongs to the P-Pant transferase superfamily. AcpS family. The cofactor is Mg(2+).

It is found in the cytoplasm. It catalyses the reaction apo-[ACP] + CoA = holo-[ACP] + adenosine 3',5'-bisphosphate + H(+). Transfers the 4'-phosphopantetheine moiety from coenzyme A to a Ser of acyl-carrier-protein. The chain is Holo-[acyl-carrier-protein] synthase from Rhodopirellula baltica (strain DSM 10527 / NCIMB 13988 / SH1).